The chain runs to 1494 residues: Ral GTPase-activating protein subunit beta (1494 aa).

2 disordered regions span residues 355 to 437 (PRSD…APRR) and 709 to 738 (ENNLKSHSRTNSGISSASGGSTEPTTPDSE). At Ser359 the chain carries Phosphoserine. Residues Thr363 and Thr379 each carry the phosphothreonine modification. Polar residues-rich tracts occupy residues 369–381 (SMPQSAAVSTTPP), 392–428 (NKATMKTSTVSTAHASKVQHQTSSTSPLSSPNQTSSE), and 711–735 (NLKSHSRTNSGISSASGGSTEPTTP). Phosphoserine is present on residues Ser421 and Ser720. Thr734 carries the phosphothreonine modification. A Rap-GAP domain is found at 1149-1392 (IGYLDLLPCR…TTLEKEVPVI (244 aa)). Ser1285 bears the Phosphoserine mark. The segment covering 1312–1323 (NLNSSQRLSPSS) has biased composition (polar residues). The disordered stretch occupies residues 1312-1335 (NLNSSQRLSPSSRMRKLPQGRPVP).

As to quaternary structure, component of the heterodimeric RalGAP1 complex with RALGAPA1 and of the heterodimeric RalGAP2 complex with RALGAPA2. Heterodimerization is required for activity. In terms of tissue distribution, highly expressed in brain, mostly in amygdala.

Its function is as follows. Non-catalytic subunit of the heterodimeric RalGAP1 and RalGAP2 complexes which act as GTPase activators for the Ras-like small GTPases RALA and RALB. The polypeptide is Ral GTPase-activating protein subunit beta (RALGAPB) (Homo sapiens (Human)).